Here is a 93-residue protein sequence, read N- to C-terminus: Parbolysin P1 (93 aa).

Intrachain disulfides connect cysteine 16-cysteine 37, cysteine 22-cysteine 33, and cysteine 47-cysteine 60.

This sequence belongs to the worm cytolysin family. Localized within the skin and proboscis and are most readily isolated from body mucus secretions.

It is found in the secreted. Cytolysin that shows hemolytic activity (on bovine erythrocytes, HC(50)=5.75 mg/ml). This hemolytic activity is completely inhibited by small unilamelar vesicles composed of PC/PG, PC/PI and PC/PS in 1:1 molar ratios (with at least 100 mg/ml concentration). The recombinant protein does not show hemolytic activity, suggesting that it is not properly folded or that it requires a free N-terminal end for its activity. This Parborlasia corrugatus (Antarctic nemertean worm) protein is Parbolysin P1.